The primary structure comprises 520 residues: Cilia- and flagella-associated protein 157 (520 aa).

The interval 1 to 22 (MAPKKSVSKAGKELEVKKKGGK) is disordered. Over residues 10 to 22 (AGKELEVKKKGGK) the composition is skewed to basic and acidic residues. 2 coiled-coil regions span residues 33-189 (LAKE…LEKK) and 236-372 (LQMA…QATS). The tract at residues 416-453 (PQKAACPHQESQSHGPPKESRPSIQLPRTGSLLPQLSD) is disordered. A compositionally biased stretch (polar residues) spans 437 to 453 (PSIQLPRTGSLLPQLSD).

This sequence belongs to the CFAP157 family. Interacts with TUBB and TUBA4A. Interacts with CEP350.

The protein resides in the cytoplasm. Its subcellular location is the cytoskeleton. It is found in the cilium basal body. In terms of biological role, specifically required during spermatogenesis for flagellum morphogenesis and sperm motility. May be required to suppress the formation of supernumerary axonemes and ensure a correct ultrastructure. This chain is Cilia- and flagella-associated protein 157, found in Homo sapiens (Human).